The primary structure comprises 45 residues: uncharacterized protein (45 aa).

This is an uncharacterized protein from Bacillus subtilis (strain 168).